Reading from the N-terminus, the 583-residue chain is MAGSEQQRPRRRDDGDSDAAAAAAAPLQDAELALAGINMLLNNGFRESDQLFKQYRNHSPLMSFGASFVSFLNAMMTFEEEKMQLACDDLKTTEKLCESEEAGVIETIKNKIKKNVDVRKSAPSMVDRLQRQIIIADCQVYLAVLSFVKQELSAYIKGGWILRKAWKIYNKCYLDINALQELYQKKLTEESLTSDAANDNHIVAEGVSEESLNRLKGAVSFGYGLFHLCISMVPPNLLKIINLLGFPGDRLQGLSSLMYASESKDMKAPLATLALLWYHTVVRPFFALDGSDNKAGLDEAKEILLKKEAAYPNSSLFMFFKGRIQRLECQINSALTSFHTALELAVDQREIQHVCLYEIGWCSMIELNFKDAFDSFERLKNESRWSQCYYAYLTAVCQGATGDVDGAQIVFKEVQKLFKRKNNQIEQFSVKKAERFRKQTPTKALCVLASIEVLYLWKALPNCSFPNLQRMSQACHEVDDSSVVGLKYLLLGAIHKCLGNSEDAVQYFQRAVKDELCRQNNLYVQPYACYELGCLLLDKPETVGRGRALLLQAKEDFSGYDFENRLHVRIHAALASLRELVPQ.

The disordered stretch occupies residues 1–22; sequence MAGSEQQRPRRRDDGDSDAAAA. 3 TPR repeats span residues 315–348, 353–386, and 485–518; these read SLFM…AVDQ, HVCL…SRWS, and GLKY…ELCR.

This sequence belongs to the TTC39 family.

In Homo sapiens (Human), this protein is Tetratricopeptide repeat protein 39C (TTC39C).